A 237-amino-acid polypeptide reads, in one-letter code: Ribonuclease PH (237 aa).

Residues arginine 86 and 124 to 126 (GTR) each bind phosphate.

This sequence belongs to the RNase PH family. In terms of assembly, homohexameric ring arranged as a trimer of dimers.

It catalyses the reaction tRNA(n+1) + phosphate = tRNA(n) + a ribonucleoside 5'-diphosphate. Phosphorolytic 3'-5' exoribonuclease that plays an important role in tRNA 3'-end maturation. Removes nucleotide residues following the 3'-CCA terminus of tRNAs; can also add nucleotides to the ends of RNA molecules by using nucleoside diphosphates as substrates, but this may not be physiologically important. Probably plays a role in initiation of 16S rRNA degradation (leading to ribosome degradation) during starvation. In Bradyrhizobium sp. (strain ORS 278), this protein is Ribonuclease PH.